The following is a 192-amino-acid chain: Thymidylate kinase (192 aa).

Residue 7 to 14 participates in ATP binding; it reads GVDGVGKS.

This sequence belongs to the thymidylate kinase family.

It carries out the reaction dTMP + ATP = dTDP + ADP. Its function is as follows. Phosphorylation of dTMP to form dTDP in both de novo and salvage pathways of dTTP synthesis. In Campylobacter fetus subsp. fetus (strain 82-40), this protein is Thymidylate kinase.